The primary structure comprises 247 residues: tRNA (guanine-N(1)-)-methyltransferase (247 aa).

S-adenosyl-L-methionine is bound by residues G115 and 134-139 (IGDFVL).

Belongs to the RNA methyltransferase TrmD family. Homodimer.

It is found in the cytoplasm. It carries out the reaction guanosine(37) in tRNA + S-adenosyl-L-methionine = N(1)-methylguanosine(37) in tRNA + S-adenosyl-L-homocysteine + H(+). Its function is as follows. Specifically methylates guanosine-37 in various tRNAs. The polypeptide is tRNA (guanine-N(1)-)-methyltransferase (Anaeromyxobacter dehalogenans (strain 2CP-C)).